The primary structure comprises 140 residues: Complex III assembly factor LYRM7 (140 aa).

The segment at 93–140 (QYEFVNDQPPQRKKRGKIQIDDEQPTTCCGGGCGKPMPSNNSEKSTCS) is disordered. Over residues 130–140 (PSNNSEKSTCS) the composition is skewed to polar residues.

Belongs to the complex I LYR family. In terms of assembly, interacts with UQCRFS1.

The protein resides in the mitochondrion matrix. Its function is as follows. Assembly factor required for Rieske Fe-S protein UQCRFS1 incorporation into the cytochrome b-c1 (CIII) complex. Functions as a chaperone, binding to this subunit within the mitochondrial matrix and stabilizing it prior to its translocation and insertion into the late CIII dimeric intermediate within the mitochondrial inner membrane. This chain is Complex III assembly factor LYRM7 (lyrm7), found in Dictyostelium discoideum (Social amoeba).